Reading from the N-terminus, the 43-residue chain is Protein PsbN (43 aa).

The helical transmembrane segment at 5-27 threads the bilayer; the sequence is TLVAISISGSLVSFTGYALYTAF.

This sequence belongs to the PsbN family.

The protein localises to the plastid. It localises to the chloroplast thylakoid membrane. In terms of biological role, may play a role in photosystem I and II biogenesis. The protein is Protein PsbN of Lactoris fernandeziana.